We begin with the raw amino-acid sequence, 316 residues long: Thymidylate synthase (316 aa).

Residues Arg23 and 178–179 (RR) each bind dUMP. Residue Cys198 is the Nucleophile of the active site. Residues 218–221 (RSAD), Asn229, and 259–261 (HIY) contribute to the dUMP site. Asp221 is a binding site for (6R)-5,10-methylene-5,6,7,8-tetrahydrofolate. Ala315 provides a ligand contact to (6R)-5,10-methylene-5,6,7,8-tetrahydrofolate.

The protein belongs to the thymidylate synthase family. Bacterial-type ThyA subfamily. As to quaternary structure, homodimer.

The protein resides in the cytoplasm. It catalyses the reaction dUMP + (6R)-5,10-methylene-5,6,7,8-tetrahydrofolate = 7,8-dihydrofolate + dTMP. Its pathway is pyrimidine metabolism; dTTP biosynthesis. Functionally, catalyzes the reductive methylation of 2'-deoxyuridine-5'-monophosphate (dUMP) to 2'-deoxythymidine-5'-monophosphate (dTMP) while utilizing 5,10-methylenetetrahydrofolate (mTHF) as the methyl donor and reductant in the reaction, yielding dihydrofolate (DHF) as a by-product. This enzymatic reaction provides an intracellular de novo source of dTMP, an essential precursor for DNA biosynthesis. The polypeptide is Thymidylate synthase (Levilactobacillus brevis (strain ATCC 367 / BCRC 12310 / CIP 105137 / JCM 1170 / LMG 11437 / NCIMB 947 / NCTC 947) (Lactobacillus brevis)).